The primary structure comprises 877 residues: Leucine--tRNA ligase (877 aa).

The short motif at 48-58 (PYPSGKLHMGH) is the 'HIGH' region element. Positions 636 to 640 (KMSKS) match the 'KMSKS' region motif. Position 639 (lysine 639) interacts with ATP.

Belongs to the class-I aminoacyl-tRNA synthetase family.

The protein localises to the cytoplasm. The catalysed reaction is tRNA(Leu) + L-leucine + ATP = L-leucyl-tRNA(Leu) + AMP + diphosphate. The polypeptide is Leucine--tRNA ligase (Ralstonia nicotianae (strain ATCC BAA-1114 / GMI1000) (Ralstonia solanacearum)).